A 550-amino-acid chain; its full sequence is Arginine--tRNA ligase (550 aa).

The 'HIGH' region motif lies at 130–140 (ANPTGPIHIGG).

Belongs to the class-I aminoacyl-tRNA synthetase family. In terms of assembly, monomer.

Its subcellular location is the cytoplasm. The catalysed reaction is tRNA(Arg) + L-arginine + ATP = L-arginyl-tRNA(Arg) + AMP + diphosphate. The sequence is that of Arginine--tRNA ligase from Mycolicibacterium paratuberculosis (strain ATCC BAA-968 / K-10) (Mycobacterium paratuberculosis).